Reading from the N-terminus, the 114-residue chain is Ig heavy chain V region (114 aa).

In terms of domain architecture, Ig-like spans 1 to 106 (EVQLQQSGAE…AVRVISRYFD (106 aa)).

This is Ig heavy chain V region from Mus musculus (Mouse).